The sequence spans 92 residues: Small ribosomal subunit protein uS19c (92 aa).

Belongs to the universal ribosomal protein uS19 family.

It is found in the plastid. Its subcellular location is the chloroplast. Protein S19 forms a complex with S13 that binds strongly to the 16S ribosomal RNA. This is Small ribosomal subunit protein uS19c (rps19) from Picea abies (Norway spruce).